Here is a 772-residue protein sequence, read N- to C-terminus: Probable adenosine deaminase (772 aa).

Positions 22 and 24 each coordinate Zn(2+). Residues H24, D26, and G180 each coordinate substrate. H207 contacts Zn(2+). The active-site Proton donor is the E210. D288 is a Zn(2+) binding site.

The protein belongs to the metallo-dependent hydrolases superfamily. Adenosine and AMP deaminases family. It depends on Zn(2+) as a cofactor.

It catalyses the reaction adenosine + H2O + H(+) = inosine + NH4(+). Catalyzes the hydrolytic deamination of adenosine. Plays an important role in purine metabolism and in adenosine homeostasis, and may thereby contribute to cellular signaling events. The sequence is that of Probable adenosine deaminase (ada) from Dictyostelium discoideum (Social amoeba).